A 773-amino-acid chain; its full sequence is Ergothioneine biosynthesis protein 1 (773 aa).

The tract at residues 16–322 (PESIEQSLKR…ESTIADYSTY (307 aa)) is L-histidine N(alpha)-methyltransferase. Tyr-51 contacts L-histidine. Residues Gly-85, Lys-91, Asp-112, and 142–143 (CF) each bind S-adenosyl-L-methionine. Residues Asn-172, Tyr-212, and 287-289 (EES) contribute to the L-histidine site. Positions 347–772 (ALRKVWLFIT…YAWIGARLVK (426 aa)) are hercynylcysteine S-oxide synthase. Fe cation is bound by residues His-382, His-476, and His-480.

The protein in the N-terminal section; belongs to the methyltransferase superfamily. EgtD family. It in the C-terminal section; belongs to the EgtB family. Fe(2+) is required as a cofactor.

Its subcellular location is the cytoplasm. The protein resides in the nucleus. It catalyses the reaction L-histidine + 3 S-adenosyl-L-methionine = hercynine + 3 S-adenosyl-L-homocysteine + 3 H(+). The catalysed reaction is hercynine + L-cysteine + O2 = S-(hercyn-2-yl)-L-cysteine S-oxide + H2O. Its pathway is amino-acid biosynthesis; ergothioneine biosynthesis. Catalyzes the SAM-dependent triple methylation of the alpha-amino group of histidine to form hercynine and subsequent conjugation with cysteine and oxygen to form hercynylcysteine sulfoxide, the first two steps in the biosynthesis pathway of ergothioneine. May play a role in meiosis. The chain is Ergothioneine biosynthesis protein 1 from Schizosaccharomyces pombe (strain 972 / ATCC 24843) (Fission yeast).